A 148-amino-acid polypeptide reads, in one-letter code: Flavodoxin (148 aa).

The region spanning 4 to 145 is the Flavodoxin-like domain; that stretch reads VLILFGSSTG…AVSAFAEDVL (142 aa).

Belongs to the flavodoxin family. It depends on FMN as a cofactor.

Functionally, low-potential electron donor to a number of redox enzymes. The polypeptide is Flavodoxin (Desulfovibrio desulfuricans (strain ATCC 27774 / DSM 6949 / MB)).